A 755-amino-acid chain; its full sequence is Glucosylglycerol-phosphate synthase (755 aa).

The protein belongs to the glycosyltransferase 20 family.

The catalysed reaction is ADP-alpha-D-glucose + sn-glycerol 3-phosphate = 2-O-(alpha-D-glucopyranosyl)-sn-glycerol 3-phosphate + ADP + H(+). Its pathway is glycan metabolism; glucosylglycerol biosynthesis. Involved in salt tolerance by producing GG-phosphate from ADP-glucose and glycerol-3-phosphate (G3P), an intermediate in the synthesis of the osmolyte glucosylglycerol (GG). The protein is Glucosylglycerol-phosphate synthase (ggpS) of Pseudomonas anguilliseptica.